Here is a 327-residue protein sequence, read N- to C-terminus: 1-aminocyclopropane-1-carboxylate oxidase 1 (327 aa).

One can recognise a Fe2OG dioxygenase domain in the interval 157–257 (PTFGTKVSNY…RMSIASFYNP (101 aa)). Residues H181, D183, and H238 each contribute to the Fe cation site.

It belongs to the iron/ascorbate-dependent oxidoreductase family. Fe cation serves as cofactor.

The enzyme catalyses 1-aminocyclopropane-1-carboxylate + L-ascorbate + O2 = ethene + L-dehydroascorbate + hydrogen cyanide + CO2 + 2 H2O. Its pathway is alkene biosynthesis; ethylene biosynthesis via S-adenosyl-L-methionine; ethylene from S-adenosyl-L-methionine: step 2/2. The sequence is that of 1-aminocyclopropane-1-carboxylate oxidase 1 (ACO1) from Doritaenopsis sp. (Moth orchid).